The following is a 259-amino-acid chain: Type III pantothenate kinase (259 aa).

ATP is bound at residue 6 to 13 (DVGNTNIV). Residues Tyr-100 and 107–110 (GADR) each bind substrate. The active-site Proton acceptor is the Asp-109. Asp-129 contributes to the K(+) binding site. Thr-132 contributes to the ATP binding site. Thr-184 provides a ligand contact to substrate.

This sequence belongs to the type III pantothenate kinase family. In terms of assembly, homodimer. The cofactor is NH4(+). K(+) serves as cofactor.

The protein localises to the cytoplasm. It catalyses the reaction (R)-pantothenate + ATP = (R)-4'-phosphopantothenate + ADP + H(+). It participates in cofactor biosynthesis; coenzyme A biosynthesis; CoA from (R)-pantothenate: step 1/5. In terms of biological role, catalyzes the phosphorylation of pantothenate (Pan), the first step in CoA biosynthesis. The polypeptide is Type III pantothenate kinase (Clostridium kluyveri (strain NBRC 12016)).